The sequence spans 205 residues: Recombination protein RecR (205 aa).

A C4-type zinc finger spans residues 59 to 74 (CAMCNTFCEGGLCDIC). The 96-residue stretch at 82–177 (RRLMVVHMPA…KVSRLSQGIP (96 aa)) folds into the Toprim domain.

It belongs to the RecR family.

May play a role in DNA repair. It seems to be involved in an RecBC-independent recombinational process of DNA repair. It may act with RecF and RecO. In Neisseria meningitidis serogroup C (strain 053442), this protein is Recombination protein RecR.